Reading from the N-terminus, the 567-residue chain is Adenine deaminase (567 aa).

The protein belongs to the metallo-dependent hydrolases superfamily. Adenine deaminase family. Mn(2+) serves as cofactor.

The enzyme catalyses adenine + H2O + H(+) = hypoxanthine + NH4(+). The chain is Adenine deaminase from Methanothrix thermoacetophila (strain DSM 6194 / JCM 14653 / NBRC 101360 / PT) (Methanosaeta thermophila).